The following is a 552-amino-acid chain: Urocanate hydratase (552 aa).

NAD(+) contacts are provided by residues 49–50 (GG), Gln127, 173–175 (GMG), Asp193, 239–240 (NA), 260–264 (QTSAH), 270–271 (YI), and Tyr319. Residue Cys407 is part of the active site. Gly489 contacts NAD(+).

Belongs to the urocanase family. NAD(+) serves as cofactor.

The protein localises to the cytoplasm. The catalysed reaction is 4-imidazolone-5-propanoate = trans-urocanate + H2O. Its pathway is amino-acid degradation; L-histidine degradation into L-glutamate; N-formimidoyl-L-glutamate from L-histidine: step 2/3. Functionally, catalyzes the conversion of urocanate to 4-imidazolone-5-propionate. This is Urocanate hydratase from Bacillus mycoides (strain KBAB4) (Bacillus weihenstephanensis).